A 500-amino-acid polypeptide reads, in one-letter code: MKAFKQKQVWFITGSQDLYGPKVLEQVAKNSEQIVHGFNESSAISIEVVYKPTVKSPREIHAVCQAANSDENCVGVILWMHTFSPAKMWIAGLNELSKPFMHLHTQFNAELPWSEINMNYMNTHQSAHGCREFGFIGTRMRKERKVVVGHWQSSDVQAQIDDWCRAAAGWHESQNLRIARFGDNMRQVAVTEGDKVAAQIQFGYEVHAYSLGELNEAIAAIAEGDVTAQLDRYASEYQVGNELFGDEYQLDRLRKEAKIELGLTQFLTQGGFGAFTNCFENLTGMTGLPGLATQRLMANGFGYGGEGDWKTAAMVRIMKVMGQGRAGGTSFMEDYTYNFGATDQVLGAHMLEVCPSIAAAKPRLEVHRHTIGVRCDVPRLLFTGKAGPAINVSTIDLGNRFRIILNELDTVTPPQDLPNLPVASALWEPRPNLAVAAAAWIHAGGAHHSAYSQAITTDQIVDFAEMAGAELVIIDADTKIREFKNELRQNSVYYGLARGL.

4 residues coordinate Mn(2+): glutamate 306, glutamate 333, histidine 349, and histidine 448.

The protein belongs to the arabinose isomerase family. It depends on Mn(2+) as a cofactor.

It catalyses the reaction beta-L-arabinopyranose = L-ribulose. It functions in the pathway carbohydrate degradation; L-arabinose degradation via L-ribulose; D-xylulose 5-phosphate from L-arabinose (bacterial route): step 1/3. In terms of biological role, catalyzes the conversion of L-arabinose to L-ribulose. The polypeptide is L-arabinose isomerase (Shewanella sp. (strain MR-7)).